We begin with the raw amino-acid sequence, 190 residues long: Orotate phosphoribosyltransferase (190 aa).

114–122 (EDVITTGGS) contributes to the 5-phospho-alpha-D-ribose 1-diphosphate binding site. The orotate site is built by Thr118 and Arg146.

It belongs to the purine/pyrimidine phosphoribosyltransferase family. PyrE subfamily. As to quaternary structure, homodimer. The cofactor is Mg(2+).

The catalysed reaction is orotidine 5'-phosphate + diphosphate = orotate + 5-phospho-alpha-D-ribose 1-diphosphate. It functions in the pathway pyrimidine metabolism; UMP biosynthesis via de novo pathway; UMP from orotate: step 1/2. Its function is as follows. Catalyzes the transfer of a ribosyl phosphate group from 5-phosphoribose 1-diphosphate to orotate, leading to the formation of orotidine monophosphate (OMP). This is Orotate phosphoribosyltransferase from Caldicellulosiruptor bescii (strain ATCC BAA-1888 / DSM 6725 / KCTC 15123 / Z-1320) (Anaerocellum thermophilum).